Reading from the N-terminus, the 206-residue chain is Imidazoleglycerol-phosphate dehydratase (206 aa).

A disordered region spans residues 1–21 (MTTPSTAPTPAPRKAEVSRNT).

The protein belongs to the imidazoleglycerol-phosphate dehydratase family.

It localises to the cytoplasm. It carries out the reaction D-erythro-1-(imidazol-4-yl)glycerol 3-phosphate = 3-(imidazol-4-yl)-2-oxopropyl phosphate + H2O. The protein operates within amino-acid biosynthesis; L-histidine biosynthesis; L-histidine from 5-phospho-alpha-D-ribose 1-diphosphate: step 6/9. The protein is Imidazoleglycerol-phosphate dehydratase of Polaromonas sp. (strain JS666 / ATCC BAA-500).